Reading from the N-terminus, the 208-residue chain is Thioredoxin domain-containing protein 9 (208 aa).

Residues 68–179 (YEEVADEKEF…MENRLARSEV (112 aa)) enclose the Thioredoxin domain.

In terms of tissue distribution, expressed throughout the body with high expression in the nervous system, including the ventral nerve cord and tail neurons, and vulva.

The protein resides in the nucleus. Its subcellular location is the cytoplasm. In terms of biological role, required for normal microtubule organization and function. Regulates tubulin acetylation in ALM and PLM neurons. The protein is Thioredoxin domain-containing protein 9 of Caenorhabditis elegans.